Here is a 313-residue protein sequence, read N- to C-terminus: Probable cell division protein WhiA (313 aa).

Residues 280–313 (SLKELGAMLNPPIGKSGVNHRLKKLCSIADGLRQ) constitute a DNA-binding region (H-T-H motif).

This sequence belongs to the WhiA family.

Involved in cell division and chromosome segregation. This is Probable cell division protein WhiA from Lachnoclostridium phytofermentans (strain ATCC 700394 / DSM 18823 / ISDg) (Clostridium phytofermentans).